The following is a 338-amino-acid chain: SPbeta prophage-derived uncharacterized protein YonB (338 aa).

The protein is SPbeta prophage-derived uncharacterized protein YonB (yonB) of Bacillus subtilis (strain 168).